We begin with the raw amino-acid sequence, 82 residues long: Protein Rv1078A (82 aa).

The span at 35 to 54 (GGPTRRLRRRPAVTRRRRPD) shows a compositional bias: basic residues. Positions 35–82 (GGPTRRLRRRPAVTRRRRPDRRFVRCRPSPTRRGLPGCWRHSSTGPHT) are disordered.

The protein resides in the cytoplasm. The chain is Protein Rv1078A from Mycobacterium tuberculosis (strain ATCC 25618 / H37Rv).